A 92-amino-acid polypeptide reads, in one-letter code: Small ribosomal subunit protein uS19 (92 aa).

Belongs to the universal ribosomal protein uS19 family.

Functionally, protein S19 forms a complex with S13 that binds strongly to the 16S ribosomal RNA. The protein is Small ribosomal subunit protein uS19 of Azorhizobium caulinodans (strain ATCC 43989 / DSM 5975 / JCM 20966 / LMG 6465 / NBRC 14845 / NCIMB 13405 / ORS 571).